We begin with the raw amino-acid sequence, 158 residues long: NADPH-dependent 7-cyano-7-deazaguanine reductase (158 aa).

Cysteine 56 serves as the catalytic Thioimide intermediate. Aspartate 63 (proton donor) is an active-site residue. Residues 78-80 (LES) and 97-98 (HE) each bind substrate.

This sequence belongs to the GTP cyclohydrolase I family. QueF type 1 subfamily.

The protein resides in the cytoplasm. The enzyme catalyses 7-aminomethyl-7-carbaguanine + 2 NADP(+) = 7-cyano-7-deazaguanine + 2 NADPH + 3 H(+). It participates in tRNA modification; tRNA-queuosine biosynthesis. In terms of biological role, catalyzes the NADPH-dependent reduction of 7-cyano-7-deazaguanine (preQ0) to 7-aminomethyl-7-deazaguanine (preQ1). The chain is NADPH-dependent 7-cyano-7-deazaguanine reductase from Nitrobacter hamburgensis (strain DSM 10229 / NCIMB 13809 / X14).